The sequence spans 173 residues: Photosystem I assembly protein Ycf3 (173 aa).

TPR repeat units lie at residues 35 to 68 (AYVY…EESP), 72 to 105 (SETL…NSNQ), and 120 to 153 (GRTA…YPGG).

It belongs to the Ycf3 family.

It is found in the cellular thylakoid membrane. Functionally, essential for the assembly of the photosystem I (PSI) complex. May act as a chaperone-like factor to guide the assembly of the PSI subunits. This chain is Photosystem I assembly protein Ycf3, found in Prochlorococcus marinus (strain MIT 9313).